The following is a 348-amino-acid chain: D-alanine--D-alanine ligase (348 aa).

One can recognise an ATP-grasp domain in the interval 132 to 334 (KQVLATVGVP…YSDLIEKLVM (203 aa)). An ATP-binding site is contributed by 162–217 (LETLSFPIFVKPANMGSSVGISKATDESSLRSAIDLALKYDSRILIEQGVTAREIE). 3 residues coordinate Mg(2+): D288, E301, and N303.

Belongs to the D-alanine--D-alanine ligase family. Mg(2+) serves as cofactor. It depends on Mn(2+) as a cofactor.

The protein localises to the cytoplasm. It carries out the reaction 2 D-alanine + ATP = D-alanyl-D-alanine + ADP + phosphate + H(+). It participates in cell wall biogenesis; peptidoglycan biosynthesis. In terms of biological role, cell wall formation. The protein is D-alanine--D-alanine ligase of Streptococcus agalactiae serotype Ia (strain ATCC 27591 / A909 / CDC SS700).